We begin with the raw amino-acid sequence, 230 residues long: Triggering receptor expressed on myeloid cells 1 (230 aa).

Residues 1–20 form the signal peptide; that stretch reads MRKAGLWGLLCVFFVSEVKA. Residues 21–124 form the Ig-like V-type domain; it reads AIVLEEERYD…IYHPPNDPVV (104 aa). Over 21 to 202 the chain is Extracellular; that stretch reads AIVLEEERYD…TDADSVSTSS (182 aa). Cys-41 and Cys-113 form a disulfide bridge. Asn-191 carries N-linked (GlcNAc...) asparagine glycosylation. Residues 203–223 form a helical membrane-spanning segment; sequence VTISVICGLLSKSLVFIILFI. Residues 224–230 are Cytoplasmic-facing; sequence VTKRTFG.

In terms of assembly, monomer. Homomultimer; when activated. Interacts with TYROBP/DAP12. Interacts with TLR4.

It localises to the cell membrane. Functionally, cell surface receptor that plays important roles in innate and adaptive immunity by amplifying inflammatory responses. Upon activation by various ligands such as PGLYRP1, HMGB1 or HSP70, multimerizes and forms a complex with transmembrane adapter TYROBP/DAP12. In turn, initiates a SYK-mediated cascade of tyrosine phosphorylation, activating multiple downstream mediators such as BTK, MAPK1, MAPK3 or phospholipase C-gamma. This cascade promotes the neutrophil- and macrophage-mediated release of pro-inflammatory cytokines and/or chemokines, as well as their migration and thereby amplifies inflammatory responses that are triggered by bacterial and fungal infections. By also promoting the amplification of inflammatory signals that are initially triggered by Toll-like receptor (TLR) and NOD-like receptor engagement, plays a major role in the pathophysiology of acute and chronic inflammatory diseases of different etiologies including septic shock and atherosclerosis. The protein is Triggering receptor expressed on myeloid cells 1 (Trem1) of Mus musculus (Mouse).